A 156-amino-acid chain; its full sequence is Endogenous retrovirus group K member 6 Pro protein (156 aa).

The Peptidase A2 domain maps to 21 to 96 (FEGLVDTGAD…IPLNLWGRDL (76 aa)). Asp-26 is a catalytic residue. The G-patch domain occupies 111 to 156 (YSPTSQKIMTKMGYIPGKGLGKNEDGIKIPVEAKINQEREGIGNPC).

Belongs to the peptidase A2 family. HERV class-II K(HML-2) subfamily. In terms of assembly, active as a homodimer. Autoproteolytically processed at the N-terminus. Expected C-terminal autoprocessing not detected. The sequence shown is that of the processed Pro protein.

The catalysed reaction is Processing at the authentic HIV-1 PR recognition site and release of the mature p17 matrix and the p24 capsid protein, as a result of the cleavage of the -SQNY-|-PIVQ- cleavage site.. Functionally, retroviral proteases have roles in the processing of the primary translation products and the maturation of the viral particle. Endogenous Pro proteins may have kept, lost or modified their original function during evolution. The sequence is that of Endogenous retrovirus group K member 6 Pro protein (ERVK-6) from Homo sapiens (Human).